A 435-amino-acid chain; its full sequence is Serine/threonine-protein kinase 40 (435 aa).

Positions 1-10 are enriched in basic and acidic residues; it reads MKRRASDRGA. The interval 1 to 25 is disordered; it reads MKRRASDRGAGETSARAKALGSGIS. Residues 35 to 332 enclose the Protein kinase domain; that stretch reads FILGPRLGNS…DVLEALSAII (298 aa). ATP is bound by residues 41 to 49 and K66; that span reads LGNSPVPSI. D197 acts as the Proton acceptor in catalysis.

Belongs to the protein kinase superfamily. CAMK Ser/Thr protein kinase family.

It localises to the nucleus. Its subcellular location is the cytoplasm. The enzyme catalyses L-seryl-[protein] + ATP = O-phospho-L-seryl-[protein] + ADP + H(+). It carries out the reaction L-threonyl-[protein] + ATP = O-phospho-L-threonyl-[protein] + ADP + H(+). May be a negative regulator of NF-kappa-B and p53-mediated gene transcription. The sequence is that of Serine/threonine-protein kinase 40 (STK40) from Pongo abelii (Sumatran orangutan).